The sequence spans 219 residues: Deoxyribose-phosphate aldolase (219 aa).

The Proton donor/acceptor role is filled by D92. K154 serves as the catalytic Schiff-base intermediate with acetaldehyde. The active-site Proton donor/acceptor is the K183.

It belongs to the DeoC/FbaB aldolase family. DeoC type 1 subfamily.

It localises to the cytoplasm. It catalyses the reaction 2-deoxy-D-ribose 5-phosphate = D-glyceraldehyde 3-phosphate + acetaldehyde. Its pathway is carbohydrate degradation; 2-deoxy-D-ribose 1-phosphate degradation; D-glyceraldehyde 3-phosphate and acetaldehyde from 2-deoxy-alpha-D-ribose 1-phosphate: step 2/2. Catalyzes a reversible aldol reaction between acetaldehyde and D-glyceraldehyde 3-phosphate to generate 2-deoxy-D-ribose 5-phosphate. The protein is Deoxyribose-phosphate aldolase of Dictyoglomus turgidum (strain DSM 6724 / Z-1310).